The following is a 418-amino-acid chain: Gamma-glutamyl phosphate reductase (418 aa).

The protein belongs to the gamma-glutamyl phosphate reductase family.

It localises to the cytoplasm. The enzyme catalyses L-glutamate 5-semialdehyde + phosphate + NADP(+) = L-glutamyl 5-phosphate + NADPH + H(+). The protein operates within amino-acid biosynthesis; L-proline biosynthesis; L-glutamate 5-semialdehyde from L-glutamate: step 2/2. Functionally, catalyzes the NADPH-dependent reduction of L-glutamate 5-phosphate into L-glutamate 5-semialdehyde and phosphate. The product spontaneously undergoes cyclization to form 1-pyrroline-5-carboxylate. In Clostridium kluyveri (strain NBRC 12016), this protein is Gamma-glutamyl phosphate reductase.